The primary structure comprises 1031 residues: LRR receptor-like serine/threonine-protein kinase EFR (1031 aa).

A signal peptide spans 1-24 (MKLSFSLVFNALTLLLQVCIFAQA). The Extracellular portion of the chain corresponds to 25 to 653 (RFSNETDMQA…LSVRKKVVSG (629 aa)). N-linked (GlcNAc...) asparagine glycans are attached at residues asparagine 28, asparagine 55, and asparagine 95. LRR repeat units lie at residues 98-120 (FLRLLNLADNSFGSTIPQKVGRL), 122-144 (RLQYLNMSYNLLEGRIPSSLSNC), 146-168 (RLSTVDLSSNHLGHGVPSELGSL), 170-193 (KLAILDLSKNNLTGNFPASLGNLT), 194-216 (SLQKLDFAYNQMRGEIPDEVARL), 218-240 (QMVFFQIALNSFSGGFPPALYNI), 242-264 (SLESLSLADNSFSGNLRADFGYL), 267-289 (NLRRLLLGTNQFTGAIPKTLANI), 291-312 (SLERFDISSNYLSGSIPLSFGK), and 315-335 (NLWWLGIRNNSLGNNSSSGLE). Residues asparagine 127 and asparagine 143 are each glycosylated (N-linked (GlcNAc...) asparagine). N-linked (GlcNAc...) asparagine glycans are attached at residues asparagine 180 and asparagine 191. Asparagine 239 is a glycosylation site (N-linked (GlcNAc...) asparagine). The N-linked (GlcNAc...) asparagine glycan is linked to asparagine 288. N-linked (GlcNAc...) asparagine glycosylation is found at asparagine 323, asparagine 329, asparagine 342, and asparagine 366. LRR repeat units follow at residues 345–368 (QLEYLDVGYNRLGGELPASIANLS), 370–392 (TLTSLFLGQNLISGTIPHDIGNL), 394–416 (SLQELSLETNMLSGELPVSFGKL), 418–440 (NLQVVDLYSNAISGEIPSYFGNM), 442–464 (RLQKLHLNSNSFHGRIPQSLGRC), 466–487 (YLLDLWMDTNRLNGTIPQEILQ), 490–512 (SLAYIDLSNNFLTGHFPEEVGKL), 514–536 (LLVGLGASYNKLSGKMPQAIGGC), 538–560 (SMEFLFMQGNSFDGAIPDISRLV), 561–584 (SLKNVDFSNNNLSGRIPRYLASLP), and 585–597 (SLRNLNLSMNKFE). Asparagine 439 carries an N-linked (GlcNAc...) asparagine glycan. Asparagine 478 is a glycosylation site (N-linked (GlcNAc...) asparagine). 3 N-linked (GlcNAc...) asparagine glycosylation sites follow: asparagine 571, asparagine 590, and asparagine 608. A helical transmembrane segment spans residues 654 to 674 (ICIGIASLLLIIIVASLCWFM). The Cytoplasmic segment spans residues 675-1031 (KRKKKNNASD…WMLNTDMHTM (357 aa)). Threonine 709 is subject to Phosphothreonine. A Protein kinase domain is found at 712–1001 (FSSTNLIGSG…ELISIRSKFF (290 aa)). ATP-binding positions include 718 to 726 (IGSGNFGNV) and lysine 741. Phosphotyrosine is present on residues tyrosine 791 and tyrosine 836. Aspartate 849 functions as the Proton acceptor in the catalytic mechanism. Tyrosine 897 carries the post-translational modification Phosphotyrosine. The span at 1005–1020 (TTITESPRDAPQSSPQ) shows a compositional bias: polar residues. The interval 1005–1031 (TTITESPRDAPQSSPQEWMLNTDMHTM) is disordered.

Belongs to the protein kinase superfamily. Ser/Thr protein kinase family. Binds to Pseudomonas syringae AvrPto1 and (via the kinase and cytoplasmic domains) to hopD2. Interacts with SERK3/BAK1, SERK4/BKK1, SERK1 and SERK2 in a specific ligand-induced manner. Binds to IOS1. Binds to BIK1 in the absence of pathogen elicitor; dissociates upon pathogen-associated molecular pattern (PAMP)-triggered activation. Autophosphorylated after elicitation with elfl18. Autophosphorylation is inhibited by the binding with avrPto1. Phosphorylation at T-836 is required for immune signaling. Post-translationally, polyubiquitinated at the kinase domain mediated by P.syringae AvrPtoB.

The protein localises to the cell membrane. It localises to the endomembrane system. The catalysed reaction is L-seryl-[protein] + ATP = O-phospho-L-seryl-[protein] + ADP + H(+). It carries out the reaction L-threonyl-[protein] + ATP = O-phospho-L-threonyl-[protein] + ADP + H(+). Its function is as follows. Constitutes the pattern-recognition receptor (PPR) that determines the specific perception of elongation factor Tu (EF-Tu), a potent elicitor of the defense response to pathogen-associated molecular patterns (PAMPs); phosphorylates BIK1 upon elicitation to regulate immune responses such as defense hormone expression (e.g. jasmonic acid (JA) and salicylic acid (SA)). Reduces transformation by Rhizobium radiobacter probably by inducing plant defense during the interaction. Binding to the effector AvrPto1 from P.syringae blocks the downstream plant immune response while interaction with hopD2 decreases the phosphorylation level of EFR upon elf18 treatment. Specific endoplasmic reticulum quality control components (ERD2B, CRT3, UGGT and STT3A) are required for the biogenesis of EFR. This is LRR receptor-like serine/threonine-protein kinase EFR from Arabidopsis thaliana (Mouse-ear cress).